A 313-amino-acid polypeptide reads, in one-letter code: 2,3-dihydroxyphenylpropionate/2,3-dihydroxicinnamic acid 1,2-dioxygenase (313 aa).

Residue His-115 is the Proton donor of the active site. The Proton acceptor role is filled by His-179.

Belongs to the LigB/MhpB extradiol dioxygenase family. As to quaternary structure, homotetramer. Fe(2+) serves as cofactor.

It catalyses the reaction 3-(2,3-dihydroxyphenyl)propanoate + O2 = (2Z,4E)-2-hydroxy-6-oxonona-2,4-dienedioate + H(+). The enzyme catalyses (2E)-3-(2,3-dihydroxyphenyl)prop-2-enoate + O2 = (2Z,4E,7E)-2-hydroxy-6-oxonona-2,4,7-trienedioate + H(+). It participates in aromatic compound metabolism; 3-phenylpropanoate degradation. In terms of biological role, catalyzes the non-heme iron(II)-dependent oxidative cleavage of 2,3-dihydroxyphenylpropionic acid and 2,3-dihydroxicinnamic acid into 2-hydroxy-6-ketononadienedioate and 2-hydroxy-6-ketononatrienedioate, respectively. This chain is 2,3-dihydroxyphenylpropionate/2,3-dihydroxicinnamic acid 1,2-dioxygenase, found in Mycobacterium ulcerans (strain Agy99).